The primary structure comprises 413 residues: Multifunctional CCA protein (413 aa).

Residues Gly-8 and Arg-11 each contribute to the ATP site. 2 residues coordinate CTP: Gly-8 and Arg-11. Positions 21 and 23 each coordinate Mg(2+). ATP contacts are provided by Arg-91, Arg-137, and Arg-140. Residues Arg-91, Arg-137, and Arg-140 each coordinate CTP. The HD domain maps to 228–329 (TGIHTLMVLE…VKLFDKADLW (102 aa)).

It belongs to the tRNA nucleotidyltransferase/poly(A) polymerase family. Bacterial CCA-adding enzyme type 1 subfamily. Monomer. Can also form homodimers and oligomers. Requires Mg(2+) as cofactor. Ni(2+) serves as cofactor.

The enzyme catalyses a tRNA precursor + 2 CTP + ATP = a tRNA with a 3' CCA end + 3 diphosphate. The catalysed reaction is a tRNA with a 3' CCA end + 2 CTP + ATP = a tRNA with a 3' CCACCA end + 3 diphosphate. In terms of biological role, catalyzes the addition and repair of the essential 3'-terminal CCA sequence in tRNAs without using a nucleic acid template. Adds these three nucleotides in the order of C, C, and A to the tRNA nucleotide-73, using CTP and ATP as substrates and producing inorganic pyrophosphate. tRNA 3'-terminal CCA addition is required both for tRNA processing and repair. Also involved in tRNA surveillance by mediating tandem CCA addition to generate a CCACCA at the 3' terminus of unstable tRNAs. While stable tRNAs receive only 3'-terminal CCA, unstable tRNAs are marked with CCACCA and rapidly degraded. The sequence is that of Multifunctional CCA protein from Shewanella loihica (strain ATCC BAA-1088 / PV-4).